Consider the following 227-residue polypeptide: MTLSFLDQFASQSFLGIPLIAIAILIPWMLFPSPYKRWMSNRLITFQSWFIARTTNQLMLPLNTGAHKWAMILTALLLFLMTLNLLGLLPYTFTPTTQLSMNMALAVPLWLATVLIGMRNQPTHSLAHLLPEGTPTPLIPILIIIETISLFIRPLALGVRLTANLTAGHLLIQLISTATFVMLSIMPTIATLTFIVLALLTILEIAVAMIQAYVLVLLLSLYLQENV.

Helical transmembrane passes span 14 to 34 (FLGIPLIAIAILIPWMLFPSP), 69 to 89 (WAMILTALLLFLMTLNLLGLL), 98 to 118 (QLSMNMALAVPLWLATVLIGM), 139 to 159 (IPILIIIETISLFIRPLALGV), 165 to 185 (LTAGHLLIQLISTATFVMLSI), and 189 to 209 (IATLTFIVLALLTILEIAVAM).

Belongs to the ATPase A chain family. In terms of assembly, component of the ATP synthase complex composed at least of ATP5F1A/subunit alpha, ATP5F1B/subunit beta, ATP5MC1/subunit c (homooctomer), MT-ATP6/subunit a, MT-ATP8/subunit 8, ATP5ME/subunit e, ATP5MF/subunit f, ATP5MG/subunit g, ATP5MK/subunit k, ATP5MJ/subunit j, ATP5F1C/subunit gamma, ATP5F1D/subunit delta, ATP5F1E/subunit epsilon, ATP5PF/subunit F6, ATP5PB/subunit b, ATP5PD/subunit d, ATP5PO/subunit OSCP. ATP synthase complex consists of a soluble F(1) head domain (subunits alpha(3) and beta(3)) - the catalytic core - and a membrane F(0) domain - the membrane proton channel (subunits c, a, 8, e, f, g, k and j). These two domains are linked by a central stalk (subunits gamma, delta, and epsilon) rotating inside the F1 region and a stationary peripheral stalk (subunits F6, b, d, and OSCP). Interacts with DNAJC30; interaction is direct.

It is found in the mitochondrion inner membrane. The enzyme catalyses H(+)(in) = H(+)(out). Its function is as follows. Subunit a, of the mitochondrial membrane ATP synthase complex (F(1)F(0) ATP synthase or Complex V) that produces ATP from ADP in the presence of a proton gradient across the membrane which is generated by electron transport complexes of the respiratory chain. ATP synthase complex consist of a soluble F(1) head domain - the catalytic core - and a membrane F(1) domain - the membrane proton channel. These two domains are linked by a central stalk rotating inside the F(1) region and a stationary peripheral stalk. During catalysis, ATP synthesis in the catalytic domain of F(1) is coupled via a rotary mechanism of the central stalk subunits to proton translocation. With the subunit c (ATP5MC1), forms the proton-conducting channel in the F(0) domain, that contains two crucial half-channels (inlet and outlet) that facilitate proton movement from the mitochondrial intermembrane space (IMS) into the matrix. Protons are taken up via the inlet half-channel and released through the outlet half-channel, following a Grotthuss mechanism. This is ATP synthase F(0) complex subunit a from Polypterus ornatipinnis (Ornate bichir).